The sequence spans 91 residues: MNLKVLKKTEDELRIEFEGERHTLLNLLRSELLEDERVVIATYDAKFPIMDNPVFRLKTRGVDPLDVIRDASARIADLCDEFLREYEEAVR.

It belongs to the archaeal Rpo11/eukaryotic RPB11/RPC19 RNA polymerase subunit family. In terms of assembly, part of the RNA polymerase complex.

The protein resides in the cytoplasm. The enzyme catalyses RNA(n) + a ribonucleoside 5'-triphosphate = RNA(n+1) + diphosphate. Its function is as follows. DNA-dependent RNA polymerase (RNAP) catalyzes the transcription of DNA into RNA using the four ribonucleoside triphosphates as substrates. This is DNA-directed RNA polymerase subunit Rpo11 from Methanothrix thermoacetophila (strain DSM 6194 / JCM 14653 / NBRC 101360 / PT) (Methanosaeta thermophila).